The chain runs to 658 residues: UvrABC system protein B (658 aa).

Positions 26–414 constitute a Helicase ATP-binding domain; that stretch reads AGLKKGLKHQ…PDVIEQIIRP (389 aa). 39–46 contributes to the ATP binding site; it reads GATGTGKT. A Beta-hairpin motif is present at residues 92-115; the sequence is YYDYYQPEAYVPQSDTYIEKDASI. Positions 430-592 constitute a Helicase C-terminal domain; it reads QIDDLMDEIN…ITPKTIRKEI (163 aa). The UVR domain occupies 622 to 658; the sequence is DIFIEGMEHEMKEAAKALDFERAAELRDALLEIKAEG.

It belongs to the UvrB family. Forms a heterotetramer with UvrA during the search for lesions. Interacts with UvrC in an incision complex.

Its subcellular location is the cytoplasm. Its function is as follows. The UvrABC repair system catalyzes the recognition and processing of DNA lesions. A damage recognition complex composed of 2 UvrA and 2 UvrB subunits scans DNA for abnormalities. Upon binding of the UvrA(2)B(2) complex to a putative damaged site, the DNA wraps around one UvrB monomer. DNA wrap is dependent on ATP binding by UvrB and probably causes local melting of the DNA helix, facilitating insertion of UvrB beta-hairpin between the DNA strands. Then UvrB probes one DNA strand for the presence of a lesion. If a lesion is found the UvrA subunits dissociate and the UvrB-DNA preincision complex is formed. This complex is subsequently bound by UvrC and the second UvrB is released. If no lesion is found, the DNA wraps around the other UvrB subunit that will check the other stand for damage. The protein is UvrABC system protein B of Listeria innocua serovar 6a (strain ATCC BAA-680 / CLIP 11262).